Here is a 506-residue protein sequence, read N- to C-terminus: Transcription factor CP2 (506 aa).

The Grh/CP2 DB domain occupies 61 to 300 (ENKILPFQYV…SPGFNSSHNS (240 aa)). The segment at 133 to 395 (EHQQLEGWRW…LFNALKGRIV (263 aa)) is DNA-binding. 2 disordered regions span residues 238–268 (FKPK…YQPS) and 291–316 (SPGF…QPEP). Residues 241–265 (KGADRKQKTDREKMEKRTPQEKEKY) are compositionally biased toward basic and acidic residues. The span at 291–300 (SPGFNSSHNS) shows a compositional bias: polar residues.

This sequence belongs to the grh/CP2 family. CP2 subfamily. In terms of assembly, component of the SSP (stage selector protein) complex, which appears to be a heteromer of TFCP2 and 2 copies of NFE4.

The protein localises to the nucleus. In terms of biological role, may function as a transcription factor. The protein is Transcription factor CP2 (tfcp2) of Xenopus laevis (African clawed frog).